The primary structure comprises 443 residues: ATP-dependent protease ATPase subunit HslU (443 aa).

ATP is bound by residues Val18, Gly60–Glu65, Asp256, Glu321, and Arg393.

The protein belongs to the ClpX chaperone family. HslU subfamily. In terms of assembly, a double ring-shaped homohexamer of HslV is capped on each side by a ring-shaped HslU homohexamer. The assembly of the HslU/HslV complex is dependent on binding of ATP.

The protein localises to the cytoplasm. Its function is as follows. ATPase subunit of a proteasome-like degradation complex; this subunit has chaperone activity. The binding of ATP and its subsequent hydrolysis by HslU are essential for unfolding of protein substrates subsequently hydrolyzed by HslV. HslU recognizes the N-terminal part of its protein substrates and unfolds these before they are guided to HslV for hydrolysis. The polypeptide is ATP-dependent protease ATPase subunit HslU (Azoarcus sp. (strain BH72)).